The sequence spans 734 residues: Translation initiation factor IF-2 (734 aa).

The disordered stretch occupies residues 39–110; it reads SKFAPRSSFT…TGKPETKKRE (72 aa). The span at 82 to 110 shows a compositional bias: basic and acidic residues; it reads DYEKRKLAEQRATRRLKGDTGKPETKKRE. Positions 238 to 405 constitute a tr-type G domain; sequence NRPPIVTVMG…SIVLQAEILD (168 aa). A G1 region spans residues 247-254; it reads GHVDHGKT. Residue 247–254 participates in GTP binding; the sequence is GHVDHGKT. Positions 272 to 276 are G2; it reads GITQH. A G3 region spans residues 293–296; that stretch reads DTPG. GTP is bound by residues 293–297 and 347–350; these read DTPGH and NKCD. A G4 region spans residues 347-350; sequence NKCD. The segment at 383-385 is G5; the sequence is SAK.

The protein belongs to the TRAFAC class translation factor GTPase superfamily. Classic translation factor GTPase family. IF-2 subfamily.

It is found in the cytoplasm. Functionally, one of the essential components for the initiation of protein synthesis. Protects formylmethionyl-tRNA from spontaneous hydrolysis and promotes its binding to the 30S ribosomal subunits. Also involved in the hydrolysis of GTP during the formation of the 70S ribosomal complex. The chain is Translation initiation factor IF-2 from Pelagibacter ubique (strain HTCC1062).